Consider the following 386-residue polypeptide: Succinate--CoA ligase [ADP-forming] subunit beta (386 aa).

In terms of domain architecture, ATP-grasp spans 9–244 (KAVLRSYGVS…LDEEDSKEIE (236 aa)). ATP-binding positions include Lys-46, 53 to 55 (GRG), Glu-99, Cys-102, and Glu-107. Asn-199 and Asp-213 together coordinate Mg(2+). Substrate is bound by residues Asn-264 and 321 to 323 (GIM).

Belongs to the succinate/malate CoA ligase beta subunit family. As to quaternary structure, heterotetramer of two alpha and two beta subunits. It depends on Mg(2+) as a cofactor.

The catalysed reaction is succinate + ATP + CoA = succinyl-CoA + ADP + phosphate. The enzyme catalyses GTP + succinate + CoA = succinyl-CoA + GDP + phosphate. It functions in the pathway carbohydrate metabolism; tricarboxylic acid cycle; succinate from succinyl-CoA (ligase route): step 1/1. In terms of biological role, succinyl-CoA synthetase functions in the citric acid cycle (TCA), coupling the hydrolysis of succinyl-CoA to the synthesis of either ATP or GTP and thus represents the only step of substrate-level phosphorylation in the TCA. The beta subunit provides nucleotide specificity of the enzyme and binds the substrate succinate, while the binding sites for coenzyme A and phosphate are found in the alpha subunit. The protein is Succinate--CoA ligase [ADP-forming] subunit beta of Bacillus cereus (strain B4264).